Here is a 178-residue protein sequence, read N- to C-terminus: Large ribosomal subunit protein bL25 (178 aa).

This sequence belongs to the bacterial ribosomal protein bL25 family. CTC subfamily. In terms of assembly, part of the 50S ribosomal subunit; part of the 5S rRNA/L5/L18/L25 subcomplex. Contacts the 5S rRNA. Binds to the 5S rRNA independently of L5 and L18.

Its function is as follows. This is one of the proteins that binds to the 5S RNA in the ribosome where it forms part of the central protuberance. This chain is Large ribosomal subunit protein bL25, found in Campylobacter jejuni subsp. jejuni serotype O:6 (strain 81116 / NCTC 11828).